We begin with the raw amino-acid sequence, 319 residues long: Taste receptor type 2 member 14 (319 aa).

The Extracellular segment spans residues 1–7 (MDGVIKS). A helical membrane pass occupies residues 8–28 (IFTFILIVEFIIGNLGNSFIV). At 29 to 55 (LVNCIDWVKRRKISLVDQILIALAISR) the chain is on the cytoplasmic side. The chain crosses the membrane as a helical span at residues 56–76 (ISLVWSIFGSWCVSVFFPALF). Topologically, residues 77–87 (ATEKLLRMLTN) are extracellular. 2 residues coordinate cholesterol: threonine 86 and tryptophan 89. The helical transmembrane segment at 88–108 (IWTVTNHFSVWLATILGTFYF) threads the bilayer. Residues 109–129 (LKIANFSNSIFLYLKWRVKKV) are Cytoplasmic-facing. The chain crosses the membrane as a helical span at residues 130–150 (VLVLLLVTLGLLFLNILLINI). Over 151–184 (HINASINGYRGNMTCSSASCNFIRFSRAIALTST) the chain is Extracellular. N-linked (GlcNAc...) asparagine glycans are attached at residues asparagine 153 and asparagine 162. Residue alanine 180 participates in cholesterol binding. A helical membrane pass occupies residues 185 to 205 (VFVLIPFTLSLATSLLLSFSL). Residues 206–233 (WKHHKKMQHTVKGYRDVSTKAHRGVMQT) lie on the Cytoplasmic side of the membrane. Residues 234–254 (VITFLLLYAVFLLTFFISIWA) form a helical membrane-spanning segment. At 255–263 (SVRLKENQI) the chain is on the extracellular side. Residues 264 to 284 (IILSEMMGLAYPSGHSCVLIL) form a helical membrane-spanning segment. 2 residues coordinate cholesterol: serine 267 and methionine 270. Residues 285–319 (GNKKLRQASLSVLWWLRYRFKHGEPSGHKEFRESS) lie on the Cytoplasmic side of the membrane.

Belongs to the G-protein coupled receptor T2R family. In terms of assembly, core component of the TAS2R14-GNAI1 complex, consisting of TAS2R14, GNAI1, GNB1 and GNG2; within the complex interacts with GNAI1. Core component of the TAS2R14-GNAT3 complex, consisting of TAS2R14, GNAT3, GNB1 and GNG2; within the complex interacts with GNAT3. Core component of the TAS2R14-GNAS2 complex, consisting of TAS2R14, GNAS2, GNB1 and GNG2; within the complex interacts with GNAS2.

It localises to the membrane. It catalyses the reaction Ca(2+)(in) = Ca(2+)(out). The catalysed reaction is 3',5'-cyclic AMP(in) = 3',5'-cyclic AMP(out). With respect to regulation, basal activity is enhanced by binding to bitter tastants, such as flufenamic acid and aristolochic acid. Regulated by cholesterol in a concentration-dependent manner. Its function is as follows. Gustducin-linked G-protein coupled receptor that plays a role in the perception of bitterness. The activity of this receptor stimulates GNAT3, activating the gustducin G-protein pathway. Likely plays a role in sensing the chemical composition of the gastrointestinal content and other extra-oral tissues via the inhibitory G-protein pathways. This is Taste receptor type 2 member 14 (TAS2R14) from Macaca mulatta (Rhesus macaque).